The following is a 346-amino-acid chain: WD repeat-containing protein LWD1 (346 aa).

Position 1 is an N-acetylmethionine (M1). 4 WD repeats span residues 79 to 121 (EHPY…SRVE), 133 to 173 (EFCG…VDTQ), 176 to 214 (AHDK…HSTI), and 265 to 305 (RHQA…QHVE).

The protein localises to the nucleus. Its function is as follows. Clock protein essential for the proper expression phase and period length of both the oscillator and output genes known to participate in photoperiod sensing. Required for the expression of APRR9, APRR7, and APRR5. Regulated by APRR9 and APRR7 at the transcriptional level, indicating the existence of a positive feedback loop within the circadian clock. May function to delay the expression of the morning genes until dawn approaches. This is WD repeat-containing protein LWD1 (LWD1) from Arabidopsis thaliana (Mouse-ear cress).